The sequence spans 706 residues: Sodium- and chloride-dependent glycine transporter 1 (706 aa).

Residues 1–26 are disordered; that stretch reads MSGGDTRAAIARPRMAAAHGPVAPSS. Topologically, residues 1-108 are cytoplasmic; that stretch reads MSGGDTRAAI…KRGNWGNQIE (108 aa). The span at 7 to 18 shows a compositional bias: low complexity; sequence RAAIARPRMAAA. 3 helical membrane-spanning segments follow: residues 109–129, 136–156, and 188–208; these read FVLT…FPYL, GAFM…LFFM, and VSTY…YYFF. The Extracellular portion of the chain corresponds to 209–285; sequence SSMTHVLPWA…LSDDIGNFGE (77 aa). 9 consecutive transmembrane segments (helical) span residues 286–306, 315–335, 360–380, 407–427, 450–470, 506–526, 530–550, 570–590, and 610–630; these read VRLP…LCLI, VVYF…VRGV, VWGD…GGLI, SVYA…HLGV, LLPI…LLGL, VAGF…WLLL, YAAS…IMYI, LFFQ…ILVF, and VAIG…YAMF. Residues 631-706 are Cytoplasmic-facing; it reads RLCRTDGDTL…GSSRLQDSRI (76 aa). Residues S673 and S698 each carry the phosphoserine modification. The essential for interaction with EXOC1 stretch occupies residues 695 to 706; sequence SNGSSRLQDSRI.

The protein belongs to the sodium:neurotransmitter symporter (SNF) (TC 2.A.22) family. SLC6A9 subfamily. Interacts with EXOC1; interaction increases the transporter capacity of SLC6A9 probably by promoting its insertion into the cell membrane. Interacts with EXOC3 and EXOC4. Expressed in the brain, kidney, pancreas, lung, placenta and liver. In terms of tissue distribution, expressed only in the brain.

The protein resides in the cell membrane. It carries out the reaction glycine(out) + chloride(out) + 2 Na(+)(out) = glycine(in) + chloride(in) + 2 Na(+)(in). Inhibited by sarcosine. Its function is as follows. Sodium- and chloride-dependent glycine transporter. Essential for regulating glycine concentrations at inhibitory glycinergic synapses. In terms of biological role, sodium- and chloride-dependent glycine transporter. The protein is Sodium- and chloride-dependent glycine transporter 1 (SLC6A9) of Homo sapiens (Human).